An 862-amino-acid chain; its full sequence is DNA mismatch repair protein MutS (862 aa).

Residue 621–628 participates in ATP binding; that stretch reads GPNMGGKS.

Belongs to the DNA mismatch repair MutS family.

Functionally, this protein is involved in the repair of mismatches in DNA. It is possible that it carries out the mismatch recognition step. This protein has a weak ATPase activity. This chain is DNA mismatch repair protein MutS, found in Vibrio cholerae serotype O1 (strain ATCC 39541 / Classical Ogawa 395 / O395).